The following is a 201-amino-acid chain: Nucleoside triphosphate pyrophosphatase (201 aa).

The Proton acceptor role is filled by aspartate 77.

Belongs to the Maf family. A divalent metal cation serves as cofactor.

It is found in the cytoplasm. The enzyme catalyses a ribonucleoside 5'-triphosphate + H2O = a ribonucleoside 5'-phosphate + diphosphate + H(+). It carries out the reaction a 2'-deoxyribonucleoside 5'-triphosphate + H2O = a 2'-deoxyribonucleoside 5'-phosphate + diphosphate + H(+). In terms of biological role, nucleoside triphosphate pyrophosphatase. May have a dual role in cell division arrest and in preventing the incorporation of modified nucleotides into cellular nucleic acids. The chain is Nucleoside triphosphate pyrophosphatase from Rickettsia akari (strain Hartford).